A 395-amino-acid polypeptide reads, in one-letter code: Phosphatidylinositol 4-phosphate 5-kinase-like protein 1 (395 aa).

The segment at Met-1–Ser-25 is disordered. The 358-residue stretch at Ala-37 to Thr-394 folds into the PIPK domain.

Interacts with type I phosphatidylinositol 4-phosphate 5-kinases, including PIP5K1A and PIP5K1B. Highly expressed in brain and testis, relatively to heart, spleen, lung, liver, skeletal muscle and kidney.

It is found in the cytoplasm. The protein resides in the membrane. In terms of biological role, may act as a scaffold to localize and regulate type I phosphatidylinositol 4-phosphate 5-kinases to specific compartments within the cell, where they generate PI(4,5)P2 for actin nucleation, signaling and scaffold protein recruitment and conversion to PI(3,4,5)P3. This Mus musculus (Mouse) protein is Phosphatidylinositol 4-phosphate 5-kinase-like protein 1 (Pip5kl1).